A 511-amino-acid polypeptide reads, in one-letter code: DELLA protein RGL1 (511 aa).

The segment covering Met1 to Ser11 has biased composition (basic and acidic residues). Positions Met1–Met20 are disordered. Residues Asp32–Val36 carry the DELLA motif motif. The short motif at Leu54–Glu58 is the LEXLE motif element. The VHYNP motif signature appears at Val73 to Pro77. In terms of domain architecture, GRAS spans Leu143 to Arg506. Residues Val150–Ile204 form a leucine repeat I (LRI) region. A LxCxE motif motif is present at residues Leu157–Glu161. The segment at Gln223 to Gly288 is VHIID. Residues Val254–Asp258 carry the VHIID motif. Residues Glu298–Glu330 are leucine repeat II (LRII). Residues Val341–Asn427 form a PFYRE region. Positions Leu349 to Leu353 match the LXXLL motif motif. Residues Ala430 to Arg506 are SAW.

The protein belongs to the GRAS family. DELLA subfamily. As to quaternary structure, interacts directly with the GID2/SLY1 component of the SCF(GID2) complex. Interacts (via N-terminus) with GID1A, GID1B and GID1B (via N-terminus). Interacts with the BOI proteins BOI, BRG1, BRG2 and BRG3. Binds to and coactivates GAF1/IDD2 and ENY/IDD1. Post-translationally, phosphorylated. May be ubiquitinated, as suggested by its interaction with GID2. Ubiquitination is however unsure since in contrast to other DELLA proteins, it is not ubiquitinated and degraded upon GA application. Nevertheless, ubiquitination may be triggered by other processes. Predominantly expressed in germinating seeds and flowers and siliques. Highly expressed in inflorescences and weakly or not expressed in rosette leaves, etiolated seedlings, siliques, mature stems and roots. RGA and GAI transcripts were detected at slightly varying levels in all tissues examined. RGL2 signal was undetected, and RGL3 signal was very weak in all tissues examined (rosette leaves, seedlings, inflorescences, and siliques) except inflorescences. In the flower, it is expressed in developing ovules as well as in developing anthers throughout microspore development.

It is found in the nucleus. Functionally, probable transcriptional regulator that acts as a repressor of the gibberellin (GA) signaling pathway. No effect of the BOI proteins on its stability. Probably acts by participating in large multiprotein complexes that repress transcription of GA-inducible genes. Has overlapping but distinct roles in GA signaling compared to RGA and GAI. Regulates the floral development. May also participate in seed germination and in ovule and anther development. Its activity is probably regulated by other phytohormones such as auxin and ethylene. The sequence is that of DELLA protein RGL1 (RGL1) from Arabidopsis thaliana (Mouse-ear cress).